Reading from the N-terminus, the 308-residue chain is Tryptophan 2,3-dioxygenase (308 aa).

The tract at residues 1–35 is disordered; sequence MQPPGDNAPAGCPFSGAHAAQPAHEAPHVPGDAAG. Residues 17-30 show a composition bias toward low complexity; it reads AHAAQPAHEAPHVP. Residues 77 to 81, Y139, and R143 each bind substrate; that span reads FIIQH. H266 contributes to the heme binding site. T280 contacts substrate.

This sequence belongs to the tryptophan 2,3-dioxygenase family. In terms of assembly, homotetramer. Heme serves as cofactor.

The catalysed reaction is L-tryptophan + O2 = N-formyl-L-kynurenine. The protein operates within amino-acid degradation; L-tryptophan degradation via kynurenine pathway; L-kynurenine from L-tryptophan: step 1/2. Heme-dependent dioxygenase that catalyzes the oxidative cleavage of the L-tryptophan (L-Trp) pyrrole ring and converts L-tryptophan to N-formyl-L-kynurenine. Catalyzes the oxidative cleavage of the indole moiety. The protein is Tryptophan 2,3-dioxygenase of Burkholderia ambifaria (strain ATCC BAA-244 / DSM 16087 / CCUG 44356 / LMG 19182 / AMMD) (Burkholderia cepacia (strain AMMD)).